Reading from the N-terminus, the 1597-residue chain is Pentafunctional AROM polypeptide (1597 aa).

Residues 1–384 (MGVPTKISIL…HEPRASTVSN (384 aa)) are 3-dehydroquinate synthase. NAD(+)-binding positions include 44 to 46 (DTN), 81 to 84 (ESSK), 114 to 116 (GGV), and Asp119. Residue Arg130 participates in 7-phospho-2-dehydro-3-deoxy-D-arabino-heptonate binding. 139–140 (TT) contributes to the NAD(+) binding site. Positions 146 and 152 each coordinate 7-phospho-2-dehydro-3-deoxy-D-arabino-heptonate. Lys161 contacts NAD(+). Asn162 is a 7-phospho-2-dehydro-3-deoxy-D-arabino-heptonate binding site. NAD(+)-binding positions include 179-182 (FLNT) and Asn190. Zn(2+) is bound at residue Glu194. Residues 194–197 (EVIK) and Lys250 each bind 7-phospho-2-dehydro-3-deoxy-D-arabino-heptonate. The active-site Proton acceptor; for 3-dehydroquinate synthase activity is Glu260. Residues 264–268 (RNLLN) and His271 contribute to the 7-phospho-2-dehydro-3-deoxy-D-arabino-heptonate site. His271 serves as a coordination point for Zn(2+). Catalysis depends on His275, which acts as the Proton acceptor; for 3-dehydroquinate synthase activity. 7-phospho-2-dehydro-3-deoxy-D-arabino-heptonate contacts are provided by His287 and Lys356. A Zn(2+)-binding site is contributed by His287. Positions 397–842 (VSPGVPKNLN…WDSLAQTFKV (446 aa)) are EPSP synthase. Cys824 serves as the catalytic For EPSP synthase activity. Positions 866 to 1057 (ASIFIIGMRG…RSKENTFFVS (192 aa)) are shikimate kinase. 872–879 (GMRGAGKT) contributes to the ATP binding site. The segment at 1058–1278 (LTLPDLAPAA…AAPGQLSARE (221 aa)) is 3-dehydroquinase. The active-site Proton acceptor; for 3-dehydroquinate dehydratase activity is the His1181. Lys1209 (schiff-base intermediate with substrate; for 3-dehydroquinate dehydratase activity) is an active-site residue. Positions 1291-1597 (SKKFAVIGNP…VQPKDDDIST (307 aa)) are shikimate dehydrogenase.

In the N-terminal section; belongs to the sugar phosphate cyclases superfamily. Dehydroquinate synthase family. The protein in the 2nd section; belongs to the EPSP synthase family. This sequence in the 3rd section; belongs to the shikimate kinase family. It in the 4th section; belongs to the type-I 3-dehydroquinase family. In the C-terminal section; belongs to the shikimate dehydrogenase family. In terms of assembly, homodimer. The cofactor is Zn(2+).

It is found in the cytoplasm. It catalyses the reaction 7-phospho-2-dehydro-3-deoxy-D-arabino-heptonate = 3-dehydroquinate + phosphate. The enzyme catalyses 3-dehydroquinate = 3-dehydroshikimate + H2O. It carries out the reaction shikimate + NADP(+) = 3-dehydroshikimate + NADPH + H(+). The catalysed reaction is shikimate + ATP = 3-phosphoshikimate + ADP + H(+). It catalyses the reaction 3-phosphoshikimate + phosphoenolpyruvate = 5-O-(1-carboxyvinyl)-3-phosphoshikimate + phosphate. The protein operates within metabolic intermediate biosynthesis; chorismate biosynthesis; chorismate from D-erythrose 4-phosphate and phosphoenolpyruvate: step 2/7. It participates in metabolic intermediate biosynthesis; chorismate biosynthesis; chorismate from D-erythrose 4-phosphate and phosphoenolpyruvate: step 3/7. Its pathway is metabolic intermediate biosynthesis; chorismate biosynthesis; chorismate from D-erythrose 4-phosphate and phosphoenolpyruvate: step 4/7. It functions in the pathway metabolic intermediate biosynthesis; chorismate biosynthesis; chorismate from D-erythrose 4-phosphate and phosphoenolpyruvate: step 5/7. The protein operates within metabolic intermediate biosynthesis; chorismate biosynthesis; chorismate from D-erythrose 4-phosphate and phosphoenolpyruvate: step 6/7. Functionally, the AROM polypeptide catalyzes 5 consecutive enzymatic reactions in prechorismate polyaromatic amino acid biosynthesis. This chain is Pentafunctional AROM polypeptide, found in Blastomyces gilchristii (strain SLH14081) (Blastomyces dermatitidis).